The primary structure comprises 443 residues: Glucose-6-phosphate isomerase (443 aa).

Glu285 functions as the Proton donor in the catalytic mechanism. Residues His306 and Lys420 contribute to the active site.

It belongs to the GPI family.

It is found in the cytoplasm. The enzyme catalyses alpha-D-glucose 6-phosphate = beta-D-fructose 6-phosphate. It functions in the pathway carbohydrate biosynthesis; gluconeogenesis. Its pathway is carbohydrate degradation; glycolysis; D-glyceraldehyde 3-phosphate and glycerone phosphate from D-glucose: step 2/4. In terms of biological role, catalyzes the reversible isomerization of glucose-6-phosphate to fructose-6-phosphate. The sequence is that of Glucose-6-phosphate isomerase from Staphylococcus aureus (strain bovine RF122 / ET3-1).